Consider the following 335-residue polypeptide: MSLDINQIALHQLIKRDEQNLELVLRDSLLEPTETVVEMVAELHRVYSAKNKAYGLFSEESELAQTLRLQRQGEEDFLAFSRAATGRLRDELAKYPFADGGFVLFCHYRYLAVEYLLVAVLSNLSSMRVNENLDINPTHYLDINHADIVARIDLTEWETNPESTRYLTFLKGRVGRKVADFFMDFLGASEGLNAKAQNRGLLQAVDDFTAEAQLDKAERQNVRQQVYSYCNEQLQAGEEIELKSLSKELAGVSEVSFTEFAAEKGYELEESFPADRSTLRQLTKFAGSGGGLTINFDAMLLGERIFWDPATDTLTIKGTPPNLRDQLQRRTSGGN.

The protein belongs to the YejK family.

The protein localises to the cytoplasm. The protein resides in the nucleoid. In Escherichia coli (strain K12 / MC4100 / BW2952), this protein is Nucleoid-associated protein YejK.